We begin with the raw amino-acid sequence, 227 residues long: 2-C-methyl-D-erythritol 4-phosphate cytidylyltransferase (227 aa).

Belongs to the IspD/TarI cytidylyltransferase family. IspD subfamily.

It carries out the reaction 2-C-methyl-D-erythritol 4-phosphate + CTP + H(+) = 4-CDP-2-C-methyl-D-erythritol + diphosphate. Its pathway is isoprenoid biosynthesis; isopentenyl diphosphate biosynthesis via DXP pathway; isopentenyl diphosphate from 1-deoxy-D-xylulose 5-phosphate: step 2/6. Catalyzes the formation of 4-diphosphocytidyl-2-C-methyl-D-erythritol from CTP and 2-C-methyl-D-erythritol 4-phosphate (MEP). The protein is 2-C-methyl-D-erythritol 4-phosphate cytidylyltransferase of Nostoc punctiforme (strain ATCC 29133 / PCC 73102).